A 167-amino-acid chain; its full sequence is Peroxiredoxin Pen c 3 (167 aa).

The region spanning 3–167 (LKAGDSFPEG…SRADHVLKQL (165 aa)) is the Thioredoxin domain. The active-site Cysteine sulfenic acid (-SOH) intermediate is the Cys60.

Belongs to the peroxiredoxin family. Prx5 subfamily. In terms of assembly, homodimer; disulfide-linked, upon oxidation.

The enzyme catalyses a hydroperoxide + [thioredoxin]-dithiol = an alcohol + [thioredoxin]-disulfide + H2O. Its function is as follows. Thiol-specific peroxidase that catalyzes the reduction of hydrogen peroxide and organic hydroperoxides to water and alcohols, respectively. Plays a role in cell protection against oxidative stress by detoxifying peroxides and as sensor of hydrogen peroxide-mediated signaling events. This Penicillium citrinum protein is Peroxiredoxin Pen c 3.